A 155-amino-acid polypeptide reads, in one-letter code: Endoribonuclease YbeY (155 aa).

Residues H120, H124, and H130 each coordinate Zn(2+).

This sequence belongs to the endoribonuclease YbeY family. Zn(2+) serves as cofactor.

It is found in the cytoplasm. Functionally, single strand-specific metallo-endoribonuclease involved in late-stage 70S ribosome quality control and in maturation of the 3' terminus of the 16S rRNA. This chain is Endoribonuclease YbeY, found in Alkaliphilus metalliredigens (strain QYMF).